A 653-amino-acid polypeptide reads, in one-letter code: Leucine-rich repeat-containing protein 4 (653 aa).

The first 38 residues, 1 to 38, serve as a signal peptide directing secretion; the sequence is MKLLWQVTVHHHTWNAILLPFVYLTAQVWILCAAIAAA. An LRRNT domain is found at 39–75; that stretch reads ASAGPQNCPSVCSCSNQFSKVVCTRRGLSEVPQGIPS. At 39–527 the chain is on the extracellular side; it reads ASAGPQNCPS…SLDEVMKTTK (489 aa). 2 cysteine pairs are disulfide-bonded: cysteine 46-cysteine 52 and cysteine 50-cysteine 61. 9 LRR repeats span residues 76–97, 100–121, 124–145, 148–169, 172–194, 197–218, 219–240, 243–264, and 267–288; these read NTRYLNLMENNIQMIQADTFRH, HLEVLQLGRNSIRQIEVGAFNG, SLNTLELFDNWLTVIPSGAFEY, KLRELWLRNNPIESIPSYAFNR, SLMRLDLGELKKLEYISEGAFEG, NLKYLNLGMCNIKDMPNLTPLV, GLEELEMSGNHFPEIRPGSFHG, SLKKLWVMNSQVSLIERNAFDG, and SLVELNLAHNNLSSLPHDLFTP. 9 N-linked (GlcNAc...) asparagine glycosylation sites follow: asparagine 277, asparagine 322, asparagine 363, asparagine 388, asparagine 410, asparagine 434, asparagine 440, asparagine 447, and asparagine 450. In terms of domain architecture, LRRCT spans 300–352; that stretch reads NPWNCDCDILWLAWWLREYIPTNSTCCGRCHAPMHMRGRYLVEVDQASFQCSA. Disulfide bonds link cysteine 304-cysteine 329 and cysteine 306-cysteine 350. The Ig-like domain maps to 353 to 442; sequence PFIMDAPRDL…SNASAYLNVS (90 aa). The cysteines at positions 374 and 424 are disulfide-linked. Residues 528–548 traverse the membrane as a helical segment; it reads IIIGCFVAVTLLAAAMLIVFY. Topologically, residues 549–653 are cytoplasmic; it reads KLRKRHQQRS…TKDKVQETQI (105 aa).

As to quaternary structure, interacts with DLG4. Interacts (via LRR repeats) with NTNG2. Forms a complex with DLG4 and with NMDA receptors. N-glycosylated. In terms of tissue distribution, specifically expressed in brain.

The protein resides in the membrane. It localises to the postsynaptic cell membrane. In terms of biological role, synaptic adhesion protein. Regulates the formation of exitatory synapses through the recruitment of pre-and-postsynaptic proteins. Organize the lamina/pathway-specific differentiation of dendrites. Plays an important role for auditory synaptic responses. Involved in the suppression of glioma. This Homo sapiens (Human) protein is Leucine-rich repeat-containing protein 4 (LRRC4).